The primary structure comprises 294 residues: 2-oxo-3-(phosphooxy)propyl 3-oxoalkanoate synthase (294 aa).

Belongs to the AfsA family.

The catalysed reaction is a medium-chain 3-oxoacyl-[ACP] + dihydroxyacetone phosphate = a (4-alkanoyl-5-oxo-2,5-dihydrofuran-3-yl)methyl phosphate + holo-[ACP] + H2O. Its function is as follows. Involved in the biosynthesis of virginiae butanolide (VB), a gamma-butyrolactone autoregulator that triggers the production of the streptogramin antibiotic virginiamycin. The sequence is that of 2-oxo-3-(phosphooxy)propyl 3-oxoalkanoate synthase from Streptomyces virginiae (Streptomyces cinnamonensis).